The chain runs to 215 residues: Probable phosphoglycerate mutase GpmB (215 aa).

Residues 8 to 15 (RHGETQWN), 21 to 22 (QG), R58, 82 to 85 (ELDM), 104 to 105 (RR), and 151 to 152 (GI) each bind substrate. The active-site Tele-phosphohistidine intermediate is the H9. The active-site Proton donor/acceptor is E82.

This sequence belongs to the phosphoglycerate mutase family. GpmB subfamily.

It catalyses the reaction (2R)-2-phosphoglycerate = (2R)-3-phosphoglycerate. Its pathway is carbohydrate degradation; glycolysis; pyruvate from D-glyceraldehyde 3-phosphate: step 3/5. The polypeptide is Probable phosphoglycerate mutase GpmB (Enterobacter sp. (strain 638)).